The sequence spans 427 residues: Glutamate-1-semialdehyde 2,1-aminomutase (427 aa).

Position 265 is an N6-(pyridoxal phosphate)lysine (lysine 265).

It belongs to the class-III pyridoxal-phosphate-dependent aminotransferase family. HemL subfamily. In terms of assembly, homodimer. Requires pyridoxal 5'-phosphate as cofactor.

It is found in the cytoplasm. The enzyme catalyses (S)-4-amino-5-oxopentanoate = 5-aminolevulinate. Its pathway is porphyrin-containing compound metabolism; protoporphyrin-IX biosynthesis; 5-aminolevulinate from L-glutamyl-tRNA(Glu): step 2/2. The chain is Glutamate-1-semialdehyde 2,1-aminomutase from Pseudomonas syringae pv. tomato (strain ATCC BAA-871 / DC3000).